The sequence spans 342 residues: Biotin synthase (342 aa).

The Radical SAM core domain occupies 38–262 (GQVQISTLLS…MMPTSYVRLS (225 aa)). 3 residues coordinate [4Fe-4S] cluster: C53, C57, and C60. Positions 97, 128, 188, and 260 each coordinate [2Fe-2S] cluster.

The protein belongs to the radical SAM superfamily. Biotin synthase family. In terms of assembly, homodimer. Requires [4Fe-4S] cluster as cofactor. The cofactor is [2Fe-2S] cluster.

It catalyses the reaction (4R,5S)-dethiobiotin + (sulfur carrier)-SH + 2 reduced [2Fe-2S]-[ferredoxin] + 2 S-adenosyl-L-methionine = (sulfur carrier)-H + biotin + 2 5'-deoxyadenosine + 2 L-methionine + 2 oxidized [2Fe-2S]-[ferredoxin]. The protein operates within cofactor biosynthesis; biotin biosynthesis; biotin from 7,8-diaminononanoate: step 2/2. Its function is as follows. Catalyzes the conversion of dethiobiotin (DTB) to biotin by the insertion of a sulfur atom into dethiobiotin via a radical-based mechanism. The chain is Biotin synthase from Baumannia cicadellinicola subsp. Homalodisca coagulata.